The sequence spans 378 residues: Putative zinc finger protein 302L (378 aa).

The C2H2-type; degenerate zinc-finger motif lies at 3–25; sequence IVCEFCDKSFDSKSKVNAHQRTK.

The protein belongs to the IIV-6 302L family.

This chain is Putative zinc finger protein 302L, found in Invertebrate iridescent virus 6 (IIV-6).